The sequence spans 423 residues: MKKICLTFVFLLSLFPIYSSQNKQAAGTIESGSSKSSGSSVGNAGPATPEFKSYKEEFSYWYTYYSVYYDVLNALNDDDDNKDKKKNDEDGKTETITSAKKQNGDDVKSDNSKSTAIKKSGGGKTDGEASKKNNSANSWKIILKLLGFNVVDKENGNGKGGSANNGGEGGATSAGSAGATSGAGANGGDAGETEAGEGNGASSDGAGGESGGAGAGAGAGAGAGAGGGAGAGAGAGASAGAGAGGAQGDAEAASAGSTAGSTSSGGAAASGASSGAGSSDSGQGASAGGAAAGASAASAAGGGGAAIGGSASAASGSAASSGSSAGASAAASGSAAGGNKFTKLIKIVQMASMMGGVENLMENPLALQMIMSSSGASAGASAAGSSAAGSSAAGAGGGAGAAGAAGASAXAGAGAGASARAGV.

Residues 1-20 (MKKICLTFVFLLSLFPIYSS) form the signal peptide. 4 disordered regions span residues 28–47 (TIESGSSKSSGSSVGNAGPA), 78–133 (DDDN…SKKN), 159–219 (KGGS…GAGA), and 236–288 (GASA…ASAG). The span at 31–42 (SGSSKSSGSSVG) shows a compositional bias: low complexity. Composition is skewed to basic and acidic residues over residues 81 to 93 (NKDKKKNDEDGKT) and 102 to 111 (QNGDDVKSDN). Residues 159-172 (KGGSANNGGEGGAT) are compositionally biased toward gly residues. Residues 173–183 (SAGSAGATSGA) show a composition bias toward low complexity. Composition is skewed to gly residues over residues 205–219 (GAGGESGGAGAGAGA) and 236–247 (GASAGAGAGGAQ). The segment covering 248-284 (GDAEAASAGSTAGSTSSGGAAASGASSGAGSSDSGQG) has biased composition (low complexity).

In terms of tissue distribution, nacreous layer of shell (at protein level).

The protein localises to the secreted. The chain is Glycine-rich protein 1 from Pinctada maxima (Silver-lipped pearl oyster).